The primary structure comprises 298 residues: Acetyl-coenzyme A carboxylase carboxyl transferase subunit beta 1 (298 aa).

The CoA carboxyltransferase N-terminal domain occupies 26 to 294 (MWVKCPSCGD…RAADVQNAPA (269 aa)). Residues Cys30, Cys33, Cys49, and Cys51 each coordinate Zn(2+). The C4-type zinc finger occupies 30-51 (CPSCGDLIYTRQFSDNLKVCKC).

The protein belongs to the AccD/PCCB family. In terms of assembly, acetyl-CoA carboxylase is a heterohexamer composed of biotin carboxyl carrier protein (AccB), biotin carboxylase (AccC) and two subunits each of ACCase subunit alpha (AccA) and ACCase subunit beta (AccD). Requires Zn(2+) as cofactor.

Its subcellular location is the cytoplasm. The catalysed reaction is N(6)-carboxybiotinyl-L-lysyl-[protein] + acetyl-CoA = N(6)-biotinyl-L-lysyl-[protein] + malonyl-CoA. It participates in lipid metabolism; malonyl-CoA biosynthesis; malonyl-CoA from acetyl-CoA: step 1/1. Its function is as follows. Component of the acetyl coenzyme A carboxylase (ACC) complex. Biotin carboxylase (BC) catalyzes the carboxylation of biotin on its carrier protein (BCCP) and then the CO(2) group is transferred by the transcarboxylase to acetyl-CoA to form malonyl-CoA. This is Acetyl-coenzyme A carboxylase carboxyl transferase subunit beta 1 from Roseiflexus castenholzii (strain DSM 13941 / HLO8).